Here is a 253-residue protein sequence, read N- to C-terminus: uncharacterized protein (253 aa).

Positions 1–14 are enriched in low complexity; it reads MKVPILSRLRSLSS. 2 disordered regions span residues 1–192 and 212–253; these read MKVP…PKSS and PETV…AIQL. Basic and acidic residues-rich tracts occupy residues 17–30 and 45–60; these read RNNE…EHQV and KSDK…KSGE. Low complexity-rich tracts occupy residues 63–104 and 111–154; these read PSTP…GSDS and KTLS…QTPR. Residues 215–235 are compositionally biased toward polar residues; it reads VVTSTPRQQSRPPSAQNTPNF. Residues 236–253 show a composition bias toward low complexity; the sequence is TSQGGSRSTSRRQSAIQL.

This is an uncharacterized protein from Dictyostelium discoideum (Social amoeba).